The chain runs to 479 residues: RAC-gamma serine/threonine-protein kinase (479 aa).

Position 2 is an N-acetylserine (serine 2). Residues 5–107 (TIVKEDWVQK…WTEAIQAVAD (103 aa)) enclose the PH domain. Residues cysteine 59 and cysteine 76 are joined by a disulfide bond. The Protein kinase domain occupies 148 to 405 (FDYLKLLGKG…PKEIMRHSFF (258 aa)). ATP is bound by residues 154-162 (LGKGTFGKV) and lysine 177. The Proton acceptor role is filled by aspartate 271. Residues cysteine 293 and cysteine 307 are joined by a disulfide bond. The O-linked (GlcNAc) threonine glycan is linked to threonine 302. At threonine 305 the chain carries Phosphothreonine; by PDPK1. O-linked (GlcNAc) threonine glycosylation is present at threonine 309. In terms of domain architecture, AGC-kinase C-terminal spans 406-479 (SGVNWQDVYD…QFSYSASGRE (74 aa)). The segment at 446 to 479 (ITPPEKDDDDGMDCMDNERRPHFPQFSYSASGRE) is disordered. Threonine 447 is subject to Phosphothreonine. The segment covering 451–460 (KDDDDGMDCM) has biased composition (acidic residues). Serine 472 carries the post-translational modification Phosphoserine; by PKC/PRKCZ. An O-linked (GlcNAc) serine; alternate glycan is attached at serine 472.

It belongs to the protein kinase superfamily. AGC Ser/Thr protein kinase family. RAC subfamily. In terms of assembly, interacts (via PH domain) with TCL1A; this enhances AKT3 phosphorylation and activation. Interacts with TRAF6. Interacts with KCTD20. Interacts with BTBD10. In terms of processing, phosphorylation on Thr-305 and Ser-472 is required for full activity. Phosphorylation of the activation loop at Thr-305 by PDPK1/PDK1 is a prerequisite for full activation. Phosphorylation at Ser-472 by mTORC2 in response to growth factors plays a key role in AKT1 activation by facilitating subsequent phosphorylation of the activation loop by PDPK1/PDK1. Ubiquitinated. When fully phosphorylated and translocated into the nucleus, undergoes 'Lys-48'-polyubiquitination catalyzed by TTC3, leading to its degradation by the proteasome. Post-translationally, O-GlcNAcylation at Thr-302 and Thr-309 inhibits activating phosphorylation at Thr-305 via disrupting the interaction between AKT and PDPK1/PDK1.

It localises to the nucleus. The protein localises to the cytoplasm. Its subcellular location is the membrane. It catalyses the reaction L-seryl-[protein] + ATP = O-phospho-L-seryl-[protein] + ADP + H(+). The catalysed reaction is L-threonyl-[protein] + ATP = O-phospho-L-threonyl-[protein] + ADP + H(+). With respect to regulation, two specific sites, one in the kinase domain (Thr-305) and the other in the C-terminal regulatory region (Ser-472), need to be phosphorylated for its full activation. IGF-1 leads to the activation of AKT3, which may play a role in regulating cell survival. Its function is as follows. AKT3 is one of 3 closely related serine/threonine-protein kinases (AKT1, AKT2 and AKT3) called the AKT kinase, and which regulate many processes including metabolism, proliferation, cell survival, growth and angiogenesis. This is mediated through serine and/or threonine phosphorylation of a range of downstream substrates. Over 100 substrate candidates have been reported so far, but for most of them, no isoform specificity has been reported. AKT3 is the least studied AKT isoform. It plays an important role in brain development and is crucial for the viability of malignant glioma cells. AKT3 isoform may also be the key molecule in up-regulation and down-regulation of MMP13 via IL13. Required for the coordination of mitochondrial biogenesis with growth factor-induced increases in cellular energy demands. Down-regulation by RNA interference reduces the expression of the phosphorylated form of BAD, resulting in the induction of caspase-dependent apoptosis. The polypeptide is RAC-gamma serine/threonine-protein kinase (Akt3) (Rattus norvegicus (Rat)).